The chain runs to 336 residues: Anthranilate phosphoribosyltransferase (336 aa).

Residues Gly-80, 83-84 (GD), Thr-88, 90-93 (NIST), 108-116 (KHGNRSITS), and Ser-120 contribute to the 5-phospho-alpha-D-ribose 1-diphosphate site. Position 80 (Gly-80) interacts with anthranilate. Ser-92 contacts Mg(2+). An anthranilate-binding site is contributed by Asn-111. Position 166 (Arg-166) interacts with anthranilate. Asp-224 and Glu-225 together coordinate Mg(2+).

Belongs to the anthranilate phosphoribosyltransferase family. As to quaternary structure, homodimer. It depends on Mg(2+) as a cofactor.

It carries out the reaction N-(5-phospho-beta-D-ribosyl)anthranilate + diphosphate = 5-phospho-alpha-D-ribose 1-diphosphate + anthranilate. Its pathway is amino-acid biosynthesis; L-tryptophan biosynthesis; L-tryptophan from chorismate: step 2/5. Catalyzes the transfer of the phosphoribosyl group of 5-phosphorylribose-1-pyrophosphate (PRPP) to anthranilate to yield N-(5'-phosphoribosyl)-anthranilate (PRA). This chain is Anthranilate phosphoribosyltransferase, found in Caldicellulosiruptor saccharolyticus (strain ATCC 43494 / DSM 8903 / Tp8T 6331).